We begin with the raw amino-acid sequence, 223 residues long: Serine/threonine/tyrosine-interacting protein (223 aa).

The Tyrosine-protein phosphatase domain maps to 28 to 176 (EMQEILPGLF…LQEYEAIYLA (149 aa)). Positions 76-78 (FQQ) match the Interaction with FBXW7 motif. 3 positions are modified to phosphoserine: Ser-184, Ser-193, and Ser-201. Positions 197–223 (GTTGSLKRTHEEEDDFGTMQVATAQNG) are disordered.

It belongs to the protein-tyrosine phosphatase family. Non-receptor class subfamily. As to quaternary structure, interacts with MAPK1; independently of MAPK1 phosphorylation status. Interacts with CARHSP1/Crhsp-24. Interacts (via FQQ motif) with FBXW7 (via F-box domain); the interaction is direct and prevents FBXW7 interaction with SKP1, a component of the SCF(FBXW7) complex.

The protein resides in the nucleus. It is found in the cytoplasm. The protein localises to the cytosol. In terms of biological role, catalytically inactive phosphatase. Acts as a nuclear anchor for MAPK1/MAPK3 (ERK1/ERK2). Modulates cell-fate decisions and cell migration by spatiotemporal regulation of MAPK1/MAPK3 (ERK1/ERK2). By binding to the F-box of FBXW7, prevents the assembly of FBXW7 into the SCF E3 ubiquitin-protein ligase complex, and thereby inhibits degradation of its substrates. Plays a role in spermatogenesis. This is Serine/threonine/tyrosine-interacting protein (STYX) from Pongo abelii (Sumatran orangutan).